A 389-amino-acid chain; its full sequence is S-adenosylmethionine synthase (389 aa).

Histidine 17 provides a ligand contact to ATP. Aspartate 19 is a Mg(2+) binding site. Glutamate 45 contacts K(+). The L-methionine site is built by glutamate 58 and glutamine 101. The flexible loop stretch occupies residues 101 to 111 (QSPDIGQGVDV). Residues 160 to 162 (DGK), 226 to 227 (RF), aspartate 235, 241 to 242 (RK), alanine 258, and lysine 262 each bind ATP. Aspartate 235 provides a ligand contact to L-methionine. Residue lysine 266 participates in L-methionine binding.

Belongs to the AdoMet synthase family. Homotetramer; dimer of dimers. Requires Mg(2+) as cofactor. K(+) serves as cofactor.

The protein localises to the cytoplasm. The enzyme catalyses L-methionine + ATP + H2O = S-adenosyl-L-methionine + phosphate + diphosphate. It functions in the pathway amino-acid biosynthesis; S-adenosyl-L-methionine biosynthesis; S-adenosyl-L-methionine from L-methionine: step 1/1. Functionally, catalyzes the formation of S-adenosylmethionine (AdoMet) from methionine and ATP. The overall synthetic reaction is composed of two sequential steps, AdoMet formation and the subsequent tripolyphosphate hydrolysis which occurs prior to release of AdoMet from the enzyme. The sequence is that of S-adenosylmethionine synthase from Anaeromyxobacter sp. (strain Fw109-5).